A 934-amino-acid chain; its full sequence is Bifunctional uridylyltransferase/uridylyl-removing enzyme (934 aa).

Residues 1–379 form a uridylyltransferase region; that stretch reads MSAHDLKLEE…TFSRRKRKLS (379 aa). Positions 380–736 are uridylyl-removing; the sequence is ADGDFVSENH…AKPHTFEAVT (357 aa). The HD domain occupies 496 to 613; the sequence is VDEHLLRCIA…IDFADTVQTM (118 aa). ACT domains are found at residues 737 to 819 and 848 to 931; these read EITV…VLAK and VIEV…RSSQ.

This sequence belongs to the GlnD family. The cofactor is Mg(2+).

It carries out the reaction [protein-PII]-L-tyrosine + UTP = [protein-PII]-uridylyl-L-tyrosine + diphosphate. The catalysed reaction is [protein-PII]-uridylyl-L-tyrosine + H2O = [protein-PII]-L-tyrosine + UMP + H(+). Uridylyltransferase (UTase) activity is inhibited by glutamine, while glutamine activates uridylyl-removing (UR) activity. Modifies, by uridylylation and deuridylylation, the PII regulatory proteins (GlnB and homologs), in response to the nitrogen status of the cell that GlnD senses through the glutamine level. Under low glutamine levels, catalyzes the conversion of the PII proteins and UTP to PII-UMP and PPi, while under higher glutamine levels, GlnD hydrolyzes PII-UMP to PII and UMP (deuridylylation). Thus, controls uridylylation state and activity of the PII proteins, and plays an important role in the regulation of nitrogen assimilation and metabolism. This is Bifunctional uridylyltransferase/uridylyl-removing enzyme from Brucella anthropi (strain ATCC 49188 / DSM 6882 / CCUG 24695 / JCM 21032 / LMG 3331 / NBRC 15819 / NCTC 12168 / Alc 37) (Ochrobactrum anthropi).